A 214-amino-acid polypeptide reads, in one-letter code: tRNA (guanine-N(7)-)-methyltransferase (214 aa).

Positions 35, 60, 87, and 113 each coordinate S-adenosyl-L-methionine. Asp-113 is an active-site residue. Substrate-binding residues include Lys-117 and Asp-149.

Belongs to the class I-like SAM-binding methyltransferase superfamily. TrmB family.

The catalysed reaction is guanosine(46) in tRNA + S-adenosyl-L-methionine = N(7)-methylguanosine(46) in tRNA + S-adenosyl-L-homocysteine. It participates in tRNA modification; N(7)-methylguanine-tRNA biosynthesis. Catalyzes the formation of N(7)-methylguanine at position 46 (m7G46) in tRNA. This is tRNA (guanine-N(7)-)-methyltransferase from Prochlorococcus marinus (strain NATL1A).